Consider the following 383-residue polypeptide: Galactokinase (383 aa).

34–37 (EHTD) provides a ligand contact to substrate. 124–130 (GAGLSSS) is a binding site for ATP. Positions 130 and 162 each coordinate Mg(2+). D174 (proton acceptor) is an active-site residue. Residue Y223 coordinates substrate.

The protein belongs to the GHMP kinase family. GalK subfamily.

The protein resides in the cytoplasm. The catalysed reaction is alpha-D-galactose + ATP = alpha-D-galactose 1-phosphate + ADP + H(+). The protein operates within carbohydrate metabolism; galactose metabolism. Functionally, catalyzes the transfer of the gamma-phosphate of ATP to D-galactose to form alpha-D-galactose-1-phosphate (Gal-1-P). The protein is Galactokinase of Serratia proteamaculans (strain 568).